A 233-amino-acid chain; its full sequence is 5'-methylthioadenosine/S-adenosylhomocysteine nucleosidase (233 aa).

Glu-12 (proton acceptor) is an active-site residue. Substrate contacts are provided by residues Gly-78, Ile-156, and 177–178 (ME). Asp-201 acts as the Proton donor in catalysis.

This sequence belongs to the PNP/UDP phosphorylase family. MtnN subfamily.

It catalyses the reaction S-adenosyl-L-homocysteine + H2O = S-(5-deoxy-D-ribos-5-yl)-L-homocysteine + adenine. The enzyme catalyses S-methyl-5'-thioadenosine + H2O = 5-(methylsulfanyl)-D-ribose + adenine. It carries out the reaction 5'-deoxyadenosine + H2O = 5-deoxy-D-ribose + adenine. The protein operates within amino-acid biosynthesis; L-methionine biosynthesis via salvage pathway; S-methyl-5-thio-alpha-D-ribose 1-phosphate from S-methyl-5'-thioadenosine (hydrolase route): step 1/2. Catalyzes the irreversible cleavage of the glycosidic bond in both 5'-methylthioadenosine (MTA) and S-adenosylhomocysteine (SAH/AdoHcy) to adenine and the corresponding thioribose, 5'-methylthioribose and S-ribosylhomocysteine, respectively. Also cleaves 5'-deoxyadenosine, a toxic by-product of radical S-adenosylmethionine (SAM) enzymes, into 5-deoxyribose and adenine. The protein is 5'-methylthioadenosine/S-adenosylhomocysteine nucleosidase of Listeria monocytogenes serotype 4a (strain HCC23).